Consider the following 215-residue polypeptide: Cytidylate kinase (215 aa).

10–18 (GPAASGKGT) contacts ATP.

The protein belongs to the cytidylate kinase family. Type 1 subfamily.

It is found in the cytoplasm. It carries out the reaction CMP + ATP = CDP + ADP. It catalyses the reaction dCMP + ATP = dCDP + ADP. This Bartonella bacilliformis (strain ATCC 35685 / KC583 / Herrer 020/F12,63) protein is Cytidylate kinase.